The primary structure comprises 553 residues: Putative transport protein AHA_3492 (553 aa).

The next 5 membrane-spanning stretches (helical) occupy residues 4–24 (IALS…LGNW), 29–49 (VGLG…FAGL), 65–85 (FGLI…FFSS), 95–115 (GFAA…HQLF), and 158–178 (MGYA…MWLI). 2 consecutive RCK C-terminal domains span residues 191–276 (AQFE…VLGE) and 279–361 (ETSL…VVGN). Helical transmembrane passes span 371–391 (MLPV…PFYL), 403–425 (AGGP…LYWF), 439–459 (IVLF…DTLI), 465–485 (AWMM…GVLA), 493–513 (YLTL…LAFA), and 533–553 (LVMF…WAGA).

Belongs to the AAE transporter (TC 2.A.81) family. YidE subfamily.

It is found in the cell membrane. In Aeromonas hydrophila subsp. hydrophila (strain ATCC 7966 / DSM 30187 / BCRC 13018 / CCUG 14551 / JCM 1027 / KCTC 2358 / NCIMB 9240 / NCTC 8049), this protein is Putative transport protein AHA_3492.